The following is a 530-amino-acid chain: Arginine--tRNA ligase (530 aa).

The 'HIGH' region signature appears at 113–123 (ANPTGPLHIGH).

This sequence belongs to the class-I aminoacyl-tRNA synthetase family. As to quaternary structure, monomer.

Its subcellular location is the cytoplasm. The enzyme catalyses tRNA(Arg) + L-arginine + ATP = L-arginyl-tRNA(Arg) + AMP + diphosphate. The polypeptide is Arginine--tRNA ligase (Campylobacter jejuni subsp. jejuni serotype O:2 (strain ATCC 700819 / NCTC 11168)).